We begin with the raw amino-acid sequence, 664 residues long: Lamin tail domain-containing protein 2 (664 aa).

Residues Met-1–Ala-40 are disordered. The stretch at Gln-118–Gln-169 forms a coiled coil. The span at Ser-245–Leu-260 shows a compositional bias: polar residues. Disordered stretches follow at residues Ser-245–Pro-272 and Thr-286–His-329. Positions Thr-286–Ser-298 are enriched in low complexity. Positions Gly-312–Gln-325 are enriched in polar residues. Positions Pro-362 to Pro-481 constitute an LTD domain. A disordered region spans residues Ser-504–Thr-563. Basic residues predominate over residues Arg-533–Ser-547.

The polypeptide is Lamin tail domain-containing protein 2 (Lmntd2) (Mus musculus (Mouse)).